The sequence spans 165 residues: MDSSRARQQLRRRFLLLPDAEAQLDREGDAGPETSTAVEKKEKPLPRLNIHSGFWILASIVVTYYVDFFKTLKENFHTSSWFLCGSALLLVSLSIAFYCIVYLEWYCGIGEYDVKYPALIPITTASFIAAGICFNIALWHVWSFFTPLLLFTQFMGVVMFITLLG.

The next 4 membrane-spanning stretches (helical) occupy residues 49-69, 81-101, 119-139, and 144-164; these read NIHS…VDFF, WFLC…YCIV, LIPI…IALW, and FFTP…ITLL.

The protein localises to the membrane. This Homo sapiens (Human) protein is Transmembrane protein 128 (TMEM128).